A 308-amino-acid polypeptide reads, in one-letter code: UDP-N-acetylenolpyruvoylglucosamine reductase (308 aa).

Residues 33-197 (TGGNADFYLS…LEASFNLAPG (165 aa)) enclose the FAD-binding PCMH-type domain. The active site involves Arg-176. Ser-226 (proton donor) is an active-site residue. Glu-296 is a catalytic residue.

This sequence belongs to the MurB family. FAD serves as cofactor.

It is found in the cytoplasm. It catalyses the reaction UDP-N-acetyl-alpha-D-muramate + NADP(+) = UDP-N-acetyl-3-O-(1-carboxyvinyl)-alpha-D-glucosamine + NADPH + H(+). It functions in the pathway cell wall biogenesis; peptidoglycan biosynthesis. In terms of biological role, cell wall formation. This is UDP-N-acetylenolpyruvoylglucosamine reductase from Staphylococcus carnosus (strain TM300).